The primary structure comprises 304 residues: tRNA pseudouridine synthase B (304 aa).

The active-site Nucleophile is the Asp38.

This sequence belongs to the pseudouridine synthase TruB family. Type 1 subfamily.

The catalysed reaction is uridine(55) in tRNA = pseudouridine(55) in tRNA. Functionally, responsible for synthesis of pseudouridine from uracil-55 in the psi GC loop of transfer RNAs. The chain is tRNA pseudouridine synthase B from Geobacter sulfurreducens (strain ATCC 51573 / DSM 12127 / PCA).